Here is a 579-residue protein sequence, read N- to C-terminus: Mitogen-activated protein kinase kinase kinase 7 (579 aa).

The interval 1–300 (MSTASAASSS…FPGADEPLQY (300 aa)) is interaction with MAPK8IP1. Residues 36 to 291 (IEVEEVVGRG…KIMTHLMRYF (256 aa)) enclose the Protein kinase domain. Residues 42–50 (VGRGAFGVV) and Lys-63 contribute to the ATP site. Residue Lys-72 forms a Glycyl lysine isopeptide (Lys-Gly) (interchain with G-Cter in ubiquitin) linkage. Residue Asp-156 is the Proton acceptor of the active site. Residue Lys-158 forms a Glycyl lysine isopeptide (Lys-Gly) (interchain with G-Cter in ubiquitin) linkage. Residues Thr-184 and Thr-187 each carry the phosphothreonine; by autocatalysis modification. Ser-192 carries the phosphoserine; by autocatalysis modification. Residue Lys-209 forms a Glycyl lysine isopeptide (Lys-Gly) (interchain with G-Cter in ubiquitin) linkage. 2 disordered regions span residues 301–338 (PCQY…MEQV) and 354–391 (KNQA…MSAD). The span at 306–338 (DEGQSNSATSTGSFMDIASTNTSNKSDTNMEQV) shows a compositional bias: polar residues. Residues 361–375 (SESGRLSLGASRGSS) are compositionally biased toward low complexity. Residues Ser-367, Ser-389, and Ser-412 each carry the phosphoserine modification. A compositionally biased stretch (polar residues) spans 416-425 (LTVTGTEPGQ). A disordered region spans residues 416–466 (LTVTGTEPGQVSSRSSSPSVRMITTSGPTSEKPARSHPWTPDDSTDTNGSD). Over residues 426-436 (VSSRSSSPSVR) the composition is skewed to low complexity. Ser-428 is subject to Phosphoserine.

It belongs to the protein kinase superfamily. STE Ser/Thr protein kinase family. MAP kinase kinase kinase subfamily. In terms of assembly, can form homodimer. Binds both upstream activators and downstream substrates in multimolecular complexes. Interacts with TAB1/MAP3K7IP1, TAB2/MAP3K7IP2 and TAB3/MAP3K7IP3. Identified in the TRIKA2 complex composed of MAP3K7/TAK1, TAB1/MAP3K7IP1 and TAB2/MAP3K7IP2. Interacts with PPM1L and PPM1B/PP2CB. Interaction with PP2A and PPP6C leads to its repressed activity. Interacts with TRAF6 and TAB1/MAP3K7IP1; during IL-1 signaling. Interacts with TAOK1 and TAOK2; interaction with TAOK2 interferes with MAP3K7 interaction with IKKA, thus preventing NF-kappa-B activation. Interacts with DYNC2I2 (via WD domains). Interacts with CYLD and RBCK1. Interacts with TGFBR1; induces MAP3K7/TAK1 activation by TRAF6. Interacts with MAPK8IP1 and SMAD6. Interacts with isoform 1 of VRK2. Interacts with DAB2; the interaction is induced by TGF-beta stimulation and may mediate TGF-beta stimulated JNK activation. Interacts with TRIM5. Part of a complex containing ITCH, NDFIP1 and MAP3K7. Interacts with PLEKHM1 (via N- and C-terminus). Interacts with TRIM8. Found in a complex with SH3RF1, RAC2, MAP2K7/MKK7, MAPK8IP1/JIP1, MAPK8/JNK1 and MAPK9/JNK2. Interacts with SASH1. Interacts with RIPK1. Requires Mg(2+) as cofactor. Association with TAB1/MAP3K7IP1 promotes autophosphorylation and subsequent activation. Association with TAB2/MAP3K7IP2, itself associated with free unanchored Lys-63 polyubiquitin chain, promotes autophosphorylation and subsequent activation of MAP3K7. Dephosphorylation at Thr-187 by PP2A and PPP6C leads to inactivation. In terms of processing, 'Lys-48'-linked polyubiquitination at Lys-72 is induced by TNFalpha, and leads to proteasomal degradation. Undergoes 'Lys-48'-linked polyubiquitination catalyzed by ITCH. 'Lys-63'-linked polyubiquitination at Lys-158 by TRIM8 does not lead to proteasomal degradation but contributes to autophosphorylation and activation. Deubiquitinated by CYLD, a protease that selectively cleaves 'Lys-63'-linked ubiquitin chains.Deubiquitinated by USP19; leading to negative regulation of TNF-alpha- and IL-1beta-triggered NF-kappa-B activation.

The protein localises to the cytoplasm. It is found in the cell membrane. It carries out the reaction L-seryl-[protein] + ATP = O-phospho-L-seryl-[protein] + ADP + H(+). The enzyme catalyses L-threonyl-[protein] + ATP = O-phospho-L-threonyl-[protein] + ADP + H(+). With respect to regulation, activated by pro-inflammatory cytokines and in response to physical and chemical stresses, including osmotic stress, oxidative stress, arsenic and ultraviolet light irradiation. Activated by 'Lys-63'-linked polyubiquitination and by autophosphorylation. Association with TAB1/MAP3K7IP1 and TAB2/MAP3K7IP2 promotes activation through autophosphorylation, whereas PPM1B/PP2CB, PP2A and PPP6C dephosphorylation leads to inactivation. Ceramides are also able to activate MAP3K7/TAK1. Functionally, serine/threonine kinase which acts as an essential component of the MAP kinase signal transduction pathway. Plays an important role in the cascades of cellular responses evoked by changes in the environment. Mediates signal transduction of TRAF6, various cytokines including interleukin-1 (IL-1), transforming growth factor-beta (TGFB), TGFB-related factors like BMP2 and BMP4, toll-like receptors (TLR), tumor necrosis factor receptor CD40 and B-cell receptor (BCR). Once activated, acts as an upstream activator of the MKK/JNK signal transduction cascade and the p38 MAPK signal transduction cascade through the phosphorylation and activation of several MAP kinase kinases like MAP2K1/MEK1, MAP2K3/MKK3, MAP2K6/MKK6 and MAP2K7/MKK7. These MAP2Ks in turn activate p38 MAPKs and c-jun N-terminal kinases (JNKs); both p38 MAPK and JNK pathways control the transcription factors activator protein-1 (AP-1). Independently of MAP2Ks and p38 MAPKs, acts as a key activator of NF-kappa-B by promoting activation of the I-kappa-B-kinase (IKK) core complex. Mechanistically, recruited to polyubiquitin chains of RIPK2 and IKBKG/NEMO via TAB2/MAP3K7IP2 and TAB3/MAP3K7IP3, and catalyzes phosphorylation and activation of IKBKB/IKKB component of the IKK complex, leading to NF-kappa-B activation. In osmotic stress signaling, plays a major role in the activation of MAPK8/JNK1, but not that of NF-kappa-B. Promotes TRIM5 capsid-specific restriction activity. Phosphorylates RIPK1 at 'Ser-321' which positively regulates RIPK1 interaction with RIPK3 to promote necroptosis but negatively regulates RIPK1 kinase activity and its interaction with FADD to mediate apoptosis. Phosphorylates STING1 in response to cGAMP-activation, promoting association between STEEP1 and STING1 and STING1 translocation to COPII vesicles. The polypeptide is Mitogen-activated protein kinase kinase kinase 7 (Map3k7) (Mus musculus (Mouse)).